A 91-amino-acid chain; its full sequence is Putative regulatory protein Moth_0891 (91 aa).

The protein belongs to the RemA family.

The sequence is that of Putative regulatory protein Moth_0891 from Moorella thermoacetica (strain ATCC 39073 / JCM 9320).